The sequence spans 125 residues: Glycine cleavage system H protein (125 aa).

The Lipoyl-binding domain occupies 23–103 (TALVGITDFA…PYNAWLIKMK (81 aa)). Position 64 is an N6-lipoyllysine (lysine 64).

Belongs to the GcvH family. As to quaternary structure, the glycine cleavage system is composed of four proteins: P, T, L and H. (R)-lipoate is required as a cofactor.

In terms of biological role, the glycine cleavage system catalyzes the degradation of glycine. The H protein shuttles the methylamine group of glycine from the P protein to the T protein. This Chlorobium chlorochromatii (strain CaD3) protein is Glycine cleavage system H protein.